A 578-amino-acid polypeptide reads, in one-letter code: Membrane protein insertase YidC (578 aa).

A helical transmembrane segment spans residues 3–23; it reads IQRSILIVALAVVSYLLVLQW. Positions 34–72 are disordered; sequence AASASMNTTQGLPDTPSASGTSSDVPTAQSSAAGSEAAD. Polar residues predominate over residues 37–66; the sequence is ASMNTTQGLPDTPSASGTSSDVPTAQSSAA. 5 helical membrane passes run 361 to 381, 387 to 407, 457 to 477, 500 to 520, and 535 to 555; these read LELT…FWLL, LIGN…LAFF, LGGC…YWVL, PFFI…MLNP, and PIIF…YWVV.

Belongs to the OXA1/ALB3/YidC family. Type 1 subfamily. In terms of assembly, interacts with the Sec translocase complex via SecD. Specifically interacts with transmembrane segments of nascent integral membrane proteins during membrane integration.

Its subcellular location is the cell inner membrane. In terms of biological role, required for the insertion and/or proper folding and/or complex formation of integral membrane proteins into the membrane. Involved in integration of membrane proteins that insert both dependently and independently of the Sec translocase complex, as well as at least some lipoproteins. Aids folding of multispanning membrane proteins. This Pseudomonas aeruginosa (strain ATCC 15692 / DSM 22644 / CIP 104116 / JCM 14847 / LMG 12228 / 1C / PRS 101 / PAO1) protein is Membrane protein insertase YidC.